Reading from the N-terminus, the 91-residue chain is Small ribosomal subunit protein uS15 (91 aa).

The protein belongs to the universal ribosomal protein uS15 family. In terms of assembly, part of the 30S ribosomal subunit. Forms a bridge to the 50S subunit in the 70S ribosome, contacting the 23S rRNA.

In terms of biological role, one of the primary rRNA binding proteins, it binds directly to 16S rRNA where it helps nucleate assembly of the platform of the 30S subunit by binding and bridging several RNA helices of the 16S rRNA. Functionally, forms an intersubunit bridge (bridge B4) with the 23S rRNA of the 50S subunit in the ribosome. This chain is Small ribosomal subunit protein uS15, found in Synechococcus sp. (strain JA-2-3B'a(2-13)) (Cyanobacteria bacterium Yellowstone B-Prime).